The following is a 457-amino-acid chain: uncharacterized protein (457 aa).

Transmembrane regions (helical) follow at residues 1 to 21 and 250 to 270; these read MVSS…MTLL and ILIV…ATTF.

It localises to the membrane. This is an uncharacterized protein from Saccharomyces cerevisiae (strain ATCC 204508 / S288c) (Baker's yeast).